Here is a 1259-residue protein sequence, read N- to C-terminus: Neural cell adhesion molecule L1 (1259 aa).

Residues 1 to 19 (MVMMLWYVLPLLLCSPCLL) form the signal peptide. The Extracellular portion of the chain corresponds to 20–1122 (IQIPDEYKGH…VSTTGSFASE (1103 aa)). 6 consecutive Ig-like C2-type domains span residues 35 to 128 (PVIT…HEIQ), 138 to 225 (PKET…EPID), 239 to 327 (PRLL…YYVT), 332 to 419 (PYWL…AYIY), 424 to 506 (PARI…NNVT), and 517 to 600 (TQIT…DEVE). 2 disulfides stabilise this stretch: Cys57–Cys113 and Cys157–Cys208. 4 N-linked (GlcNAc...) asparagine glycosylation sites follow: Asn100, Asn202, Asn246, and Asn293. Disulfide bonds link Cys263/Cys311 and Cys353/Cys403. Asn432, Asn489, and Asn504 each carry an N-linked (GlcNAc...) asparagine glycan. Cys447 and Cys496 are oxidised to a cystine. Cysteines 538 and 590 form a disulfide. 2 short sequence motifs (cell attachment site) span residues 553-555 (RGD) and 562-564 (RGD). 5 consecutive Fibronectin type-III domains span residues 613–711 (PVPH…TPEA), 716–809 (NPVD…SGED), 811–916 (PQVS…PEGV), 919–1014 (HPEA…MALF), and 1016–1116 (KPDF…VSTT). The N-linked (GlcNAc...) asparagine glycan is linked to Asn670. The tract at residues 697-724 (GEPSPVSETVVTPEAAPEKNPVDVRGEG) is disordered. Residues 712–724 (APEKNPVDVRGEG) are compositionally biased toward basic and acidic residues. 11 N-linked (GlcNAc...) asparagine glycosylation sites follow: Asn725, Asn776, Asn824, Asn848, Asn875, Asn968, Asn978, Asn1021, Asn1029, Asn1072, and Asn1106. The helical transmembrane segment at 1123–1145 (GWFIAFVSAIILLLLILLILCFI) threads the bilayer. The Cytoplasmic portion of the chain corresponds to 1146 to 1259 (KRSKGGKYSV…SPINPAVALE (114 aa)). 8 positions are modified to phosphoserine: Ser1165, Arg1179, Ser1180, Ser1183, Ser1196, Ser1245, Ser1246, and Ser1250. 2 disordered regions span residues 1182–1209 (ESDN…SDDS) and 1228–1259 (IGQY…VALE). Polar residues predominate over residues 1243-1252 (NDSSGATSPI).

The protein belongs to the immunoglobulin superfamily. L1/neurofascin/NgCAM family. In terms of assembly, interacts with SHTN1; the interaction occurs in axonal growth cones. Interacts with isoform 2 of BSG. In terms of tissue distribution, isoform 2 is predominantly found in the brain, while isoform 1 is found in the peripheral nervous system.

The protein resides in the cell membrane. It is found in the cell projection. The protein localises to the growth cone. In terms of biological role, neural cell adhesion molecule involved in the dynamics of cell adhesion and in the generation of transmembrane signals at tyrosine kinase receptors. During brain development, critical in multiple processes, including neuronal migration, axonal growth and fasciculation, and synaptogenesis. In the mature brain, plays a role in the dynamics of neuronal structure and function, including synaptic plasticity. The protein is Neural cell adhesion molecule L1 (L1cam) of Rattus norvegicus (Rat).